A 178-amino-acid polypeptide reads, in one-letter code: MASISSTVATVSRAAPAQANMVAPFTGLKSNVAFPATKKANDFSTLPSNGGRVQCMKVWPPLGKKRYETLSYLPNLTEAQLAKEVDYLLRNKWVPCLEFELEHGFVYRENARSPGYYDGRYWTMWKLPMFGCTDSAQVMKELQECKKEYPQAWIRIIGFDNVRQVQCISFIASKPEGF.

The transit peptide at 1 to 54 (MASISSTVATVSRAAPAQANMVAPFTGLKSNVAFPATKKANDFSTLPSNGGRVQ) directs the protein to the chloroplast.

The protein belongs to the RuBisCO small chain family. Heterohexadecamer of 8 large and 8 small subunits.

It localises to the plastid. The protein resides in the chloroplast. Its function is as follows. RuBisCO catalyzes two reactions: the carboxylation of D-ribulose 1,5-bisphosphate, the primary event in carbon dioxide fixation, as well as the oxidative fragmentation of the pentose substrate. Both reactions occur simultaneously and in competition at the same active site. Although the small subunit is not catalytic it is essential for maximal activity. This is Ribulose bisphosphate carboxylase small subunit, chloroplastic 2 from Flaveria pringlei.